Here is a 318-residue protein sequence, read N- to C-terminus: MTETFKHQSVLLKETVDALNVQPDGIYVDATLGGGGHSEYLLSQLTTGHLYSFDQDDHALESSRQRLAKYADAGQVTFIKSNFRFLKIALAEQGITKIDGILYDLGVSSPQFDDAQRGFSYKKEAPLDMRMDQGAELTAYTVVNEWSYQQLIKIFFRYGEEKFSKQVARKIEQQREIAPIETTIQLADLIKEAIPAPARRTGGHPAKRIFQAIRIAVNDELGAIEDSVEQAIPLVKVGGRISIITFQSLEDRLVKTMFKEQATLPDIPKGLPIMPGTEKTVLKLVNRKPILPTEDELTVNHRAHSAKLRVAEKQKEID.

S-adenosyl-L-methionine-binding positions include 35–37 (GGH), D54, F83, D104, and Q111.

It belongs to the methyltransferase superfamily. RsmH family.

The protein resides in the cytoplasm. It carries out the reaction cytidine(1402) in 16S rRNA + S-adenosyl-L-methionine = N(4)-methylcytidine(1402) in 16S rRNA + S-adenosyl-L-homocysteine + H(+). Specifically methylates the N4 position of cytidine in position 1402 (C1402) of 16S rRNA. The chain is Ribosomal RNA small subunit methyltransferase H from Latilactobacillus sakei subsp. sakei (strain 23K) (Lactobacillus sakei subsp. sakei).